Here is a 625-residue protein sequence, read N- to C-terminus: Probable potassium transport system protein Kup (625 aa).

12 helical membrane passes run 10–30 (LAAL…TSPL), 50–70 (LLGV…LKYV), 102–122 (YFPL…DSVI), 135–155 (LGVA…AILV), 172–192 (FGPV…VNII), 214–234 (GFLA…AEAL), 251–271 (FLIA…LLLL), 284–304 (LGAW…IIAS), 340–360 (IYIP…VIGF), 369–389 (AYGI…FFVI), 397–417 (LILC…LFSA), and 422–442 (LFHG…LMLT).

The protein belongs to the HAK/KUP transporter (TC 2.A.72) family.

Its subcellular location is the cell inner membrane. It catalyses the reaction K(+)(in) + H(+)(in) = K(+)(out) + H(+)(out). Transport of potassium into the cell. Likely operates as a K(+):H(+) symporter. The polypeptide is Probable potassium transport system protein Kup (Herminiimonas arsenicoxydans).